A 116-amino-acid polypeptide reads, in one-letter code: DNA polymerase epsilon subunit 4 (116 aa).

A compositionally biased stretch (low complexity) spans 1–10; the sequence is MAAAAPGSGA. The disordered stretch occupies residues 1-36; sequence MAAAAPGSGAAREEEGTGGDAATPQPPAPTSAPGAR.

In terms of assembly, component of the DNA polymerase epsilon complex consisting of four subunits: the catalytic subunit POLE and the accessory subunits POLE2, POLE3 and POLE4. Interaction with POLE3 is a prerequisite for further binding with POLE and POLE2.

It is found in the nucleus. Its function is as follows. Accessory component of the DNA polymerase epsilon complex. Participates in DNA repair and in chromosomal DNA replication. The protein is DNA polymerase epsilon subunit 4 (POLE4) of Bos taurus (Bovine).